The sequence spans 179 residues: Large ribosomal subunit protein uL6 (179 aa).

This sequence belongs to the universal ribosomal protein uL6 family. In terms of assembly, part of the 50S ribosomal subunit.

In terms of biological role, this protein binds to the 23S rRNA, and is important in its secondary structure. It is located near the subunit interface in the base of the L7/L12 stalk, and near the tRNA binding site of the peptidyltransferase center. The chain is Large ribosomal subunit protein uL6 from Clostridium perfringens (strain ATCC 13124 / DSM 756 / JCM 1290 / NCIMB 6125 / NCTC 8237 / Type A).